Reading from the N-terminus, the 78-residue chain is Acyl carrier protein (78 aa).

Positions 2–77 (SNFEERVKKI…AAIDYVVSSA (76 aa)) constitute a Carrier domain. Serine 37 carries the O-(pantetheine 4'-phosphoryl)serine modification.

This sequence belongs to the acyl carrier protein (ACP) family. Post-translationally, 4'-phosphopantetheine is transferred from CoA to a specific serine of apo-ACP by AcpS. This modification is essential for activity because fatty acids are bound in thioester linkage to the sulfhydryl of the prosthetic group.

The protein localises to the cytoplasm. It functions in the pathway lipid metabolism; fatty acid biosynthesis. Functionally, carrier of the growing fatty acid chain in fatty acid biosynthesis. Is probably involved in the biosynthesis of docosahexaenoic acid (DHA) which is produced by this bacterium as a fatty acyl component in its membrane lipid. This chain is Acyl carrier protein, found in Moritella marina (Vibrio marinus).